The chain runs to 123 residues: Large ribosomal subunit protein bL20 (123 aa).

The protein belongs to the bacterial ribosomal protein bL20 family.

Binds directly to 23S ribosomal RNA and is necessary for the in vitro assembly process of the 50S ribosomal subunit. It is not involved in the protein synthesizing functions of that subunit. The sequence is that of Large ribosomal subunit protein bL20 from Ehrlichia ruminantium (strain Gardel).